Consider the following 211-residue polypeptide: Metalloproteinase inhibitor 3 (211 aa).

Residues 1–23 (MTPWLGLVVLLSCWSLGHWGAEA) form the signal peptide. C24 lines the Zn(2+) pocket. Involved in metalloproteinase-binding stretches follow at residues 24-27 (CTCS) and 88-89 (ES). 6 disulfide bridges follow: C24–C91, C26–C118, C36–C143, C145–C192, C150–C155, and C163–C184. An NTR domain is found at 24 to 143 (CTCSPSHPQD…GLNYRYHLGC (120 aa)). Positions 105–188 (TGRVYEGKMY…SKHYACIRQK (84 aa)) are mediates interaction with EFEMP1.

Belongs to the protease inhibitor I35 (TIMP) family. In terms of assembly, interacts with EFEMP1. Interacts with KDR. Highest levels are found in kidney, lung and brain followed by ovary and uterus. Low levels are found in bone.

It localises to the secreted. The protein localises to the extracellular space. The protein resides in the extracellular matrix. Its function is as follows. Mediates a variety of processes including matrix regulation and turnover, inflammation, and angiogenesis, through reversible inhibition of zinc protease superfamily enzymes, primarily matrix metalloproteinases (MMPs). Regulates extracellular matrix (ECM) remodeling through inhibition of matrix metalloproteinases (MMP) including MMP-1, MMP-2, MMP-3, MMP-7, MMP-9, MMP-13, MMP-14 and MMP-15. Additionally, modulates the processing of amyloid precursor protein (APP) and apolipoprotein E receptor ApoER2 by inhibiting two alpha-secretases ADAM10 and ADAM17. Functions as a tumor suppressor and a potent inhibitor of angiogenesis. Exerts its anti-angiogenic effect by directly interacting with vascular endothelial growth factor (VEGF) receptor-2/KDR, preventing its binding to the VEGFA ligand. Selectively induces apoptosis in angiogenic endothelial cells through a caspase-independent cell death pathway. Mechanistically, inhibits matrix-induced focal adhesion kinase PTK2 tyrosine phosphorylation and association with paxillin/PXN and disrupts the incorporation of ITGB3, PTK2 and PXN into focal adhesion contacts on the matrix. The protein is Metalloproteinase inhibitor 3 (Timp3) of Mus musculus (Mouse).